Consider the following 768-residue polypeptide: Probable beta-glucosidase M (768 aa).

A signal peptide spans 1–19 (MHAIAGLTGLLAGVSLSYA). Residues N25, N72, and N259 are each glycosylated (N-linked (GlcNAc...) asparagine). D287 is an active-site residue. N-linked (GlcNAc...) asparagine glycosylation is found at N315, N322, N394, N434, N472, N543, and N651.

Belongs to the glycosyl hydrolase 3 family.

Its subcellular location is the secreted. The catalysed reaction is Hydrolysis of terminal, non-reducing beta-D-glucosyl residues with release of beta-D-glucose.. Its pathway is glycan metabolism; cellulose degradation. Its function is as follows. Beta-glucosidases are one of a number of cellulolytic enzymes involved in the degradation of cellulosic biomass. Catalyzes the last step releasing glucose from the inhibitory cellobiose. The chain is Probable beta-glucosidase M (bglM) from Aspergillus oryzae (strain ATCC 42149 / RIB 40) (Yellow koji mold).